Reading from the N-terminus, the 490-residue chain is Doublesex- and mab-3-related transcription factor A1 (490 aa).

Positions 1 to 13 are enriched in basic and acidic residues; sequence MERLPHGRRDRSG. A disordered region spans residues 1–31; it reads MERLPHGRRDRSGGCRPHLAPGRAAAPASAA. A compositionally biased stretch (low complexity) spans 20 to 31; the sequence is APGRAAAPASAA. Positions 86 to 133 form a DNA-binding region, DM; that stretch reads CARCRNHGVVSALKGHKRFCRWRDCACAKCTLIAERQRVMAAQVALRR. Disordered regions lie at residues 152 to 171 and 207 to 289; these read GSSGSGAQASGGSGRTESPQ and DRKQ…DLES. The segment covering 207–216 has biased composition (basic and acidic residues); that stretch reads DRKQEPKQRN. 2 stretches are compositionally biased toward polar residues: residues 217–242 and 269–289; these read CESCQSRQEEPVSNTHHHSLGSSKGN and PTDQSGGEDSPRSFSSSDLES. A DMA domain is found at 314–349; the sequence is RDPLGILTRIFPGYKHSRLEGILQFCKGDVVQAIEQ.

It belongs to the DMRT family. In terms of tissue distribution, widely expressed, with highest levels in ovary, testis, epididymis, preputial gland, vomeronasal organ, liver, salivary glands and heart. Also expressed throughout the brain with highest levels in the olfactory bulbs and medulla. Detected at similar levels in gonads of both sexes.

The protein resides in the nucleus. This chain is Doublesex- and mab-3-related transcription factor A1 (Dmrta1), found in Mus musculus (Mouse).